Reading from the N-terminus, the 375-residue chain is Mitogen-activated protein kinase 1 (375 aa).

In terms of domain architecture, Protein kinase spans 43–329; the sequence is RPPIMPIGRG…VEEALAHPYL (287 aa). Residues 49–57 and lysine 72 contribute to the ATP site; that span reads IGRGAYGIV. The active-site Proton acceptor is the aspartate 169. At threonine 201 the chain carries Phosphothreonine. Residues 201-203 carry the TXY motif; that stretch reads TEY. The residue at position 203 (tyrosine 203) is a Phosphotyrosine. Threonine 206 is subject to Phosphothreonine.

It belongs to the protein kinase superfamily. CMGC Ser/Thr protein kinase family. MAP kinase subfamily. Mg(2+) serves as cofactor. Post-translationally, activated by wounding and UV-C in a cultivar-dependent manner; phosphorylated in cv. Pungchon but not in cv. Subicho.

The catalysed reaction is L-seryl-[protein] + ATP = O-phospho-L-seryl-[protein] + ADP + H(+). The enzyme catalyses L-threonyl-[protein] + ATP = O-phospho-L-threonyl-[protein] + ADP + H(+). With respect to regulation, activated by threonine and tyrosine phosphorylation. In terms of biological role, stress-inducible protein kinase involved in oxidative stress-mediated and innate immune MAP kinase signaling cascades. In Capsicum annuum (Capsicum pepper), this protein is Mitogen-activated protein kinase 1.